Consider the following 387-residue polypeptide: TSC22 domain family protein 4 (387 aa).

2 disordered regions span residues 1–85 and 135–232; these read MSGG…GEPY and ISTP…RRDG. The segment covering 31 to 51 has biased composition (pro residues); that stretch reads PVPPALAGPPPRLPNGDPNPD. T57 bears the Phosphothreonine mark. Phosphoserine occurs at positions 62 and 165. Phosphothreonine is present on T183. 3 positions are modified to phosphoserine: S187, S189, and S219. Residue T223 is modified to Phosphothreonine. Residues S254, S258, and S271 each carry the phosphoserine modification. The tract at residues 336-357 is leucine-zipper; the sequence is LKEQIRDLAERNAALEQENGLL. A Phosphoserine modification is found at S362. Positions 368-387 are disordered; that stretch reads QLPSSGLPRLGPSAPNGPSI.

This sequence belongs to the TSC-22/Dip/Bun family. As to quaternary structure, forms a homodimer or heterodimer. Forms a heterodimer with TSC22D1 isoforms 1 and 2. Interacts with NRBP1. As to expression, expressed in the liver (at protein level). Expressed in Purkinje cells and proliferating cerebellar granular neurons (at protein level). Expressed in the cortex, medulla and papilla of the kidney.

The protein resides in the nucleus. The protein localises to the cytoplasm. Its subcellular location is the cell projection. It is found in the dendrite. It localises to the synapse. Functionally, binds DNA and acts as a transcriptional repressor. Involved in the regulation of systematic glucose homeostasis and insulin sensitivity, via transcriptional repression of downstream insulin signaling targets such as OBP2A/LCN13. Acts as a negative regulator of lipogenic gene expression in hepatocytes and thereby mediates the control of very low-density lipoprotein release. May play a role in neurite elongation and survival. The protein is TSC22 domain family protein 4 of Mus musculus (Mouse).